The primary structure comprises 670 residues: DNA ligase (670 aa).

Residues 36-40, 85-86, and Glu116 each bind NAD(+); these read DAQYD and SL. Residue Lys118 is the N6-AMP-lysine intermediate of the active site. Positions 139, 174, 290, and 314 each coordinate NAD(+). 4 residues coordinate Zn(2+): Cys408, Cys411, Cys426, and Cys431. In terms of domain architecture, BRCT spans 591–670; that stretch reads STDQTLSGKT…QDFVKLLQQQ (80 aa).

It belongs to the NAD-dependent DNA ligase family. LigA subfamily. Mg(2+) serves as cofactor. Requires Mn(2+) as cofactor.

The enzyme catalyses NAD(+) + (deoxyribonucleotide)n-3'-hydroxyl + 5'-phospho-(deoxyribonucleotide)m = (deoxyribonucleotide)n+m + AMP + beta-nicotinamide D-nucleotide.. Functionally, DNA ligase that catalyzes the formation of phosphodiester linkages between 5'-phosphoryl and 3'-hydroxyl groups in double-stranded DNA using NAD as a coenzyme and as the energy source for the reaction. It is essential for DNA replication and repair of damaged DNA. The chain is DNA ligase from Desulforamulus reducens (strain ATCC BAA-1160 / DSM 100696 / MI-1) (Desulfotomaculum reducens).